A 442-amino-acid polypeptide reads, in one-letter code: Cyclin-A1-2 (442 aa).

Polar residues-rich tracts occupy residues 1 to 12 and 39 to 63; these read MSSSSRNLSQEN and ITNQ…NKIG. The segment at 1-72 is disordered; sequence MSSSSRNLSQ…GQSKKAPKPA (72 aa).

Belongs to the cyclin family. Cyclin AB subfamily. As to quaternary structure, interacts with CDC20-1, CDC20-2, FZR2/CCS52A1 and FZR1/CCS52A2. In terms of tissue distribution, expressed in roots, stems and flowers.

The protein resides in the cytoplasm. The protein localises to the nucleus. Functionally, involved in the regulation of male meiosis progression. This is Cyclin-A1-2 (CYCA1-2) from Arabidopsis thaliana (Mouse-ear cress).